We begin with the raw amino-acid sequence, 375 residues long: DNA replication and repair protein RecF (375 aa).

Residue 30–37 (GENAQGKT) coordinates ATP.

This sequence belongs to the RecF family.

Its subcellular location is the cytoplasm. Functionally, the RecF protein is involved in DNA metabolism; it is required for DNA replication and normal SOS inducibility. RecF binds preferentially to single-stranded, linear DNA. It also seems to bind ATP. The chain is DNA replication and repair protein RecF from Bacillus mycoides (strain KBAB4) (Bacillus weihenstephanensis).